An 897-amino-acid polypeptide reads, in one-letter code: Staphylococcal nuclease domain-containing protein 1 (897 aa).

TNase-like domains are found at residues 18-167, 194-329, 342-499, and 528-663; these read QLQR…LWSE, KPVN…IWKD, RQFV…LHSK, and GRSE…LWAN. The region spanning 732–790 is the Tudor domain; it reads APRRGEFCIAKFADGEWYRARVEKVESPAKVHVFYIDYGNREVLSSTRLAALPPAFSTR.

Its subcellular location is the cytoplasm. The sequence is that of Staphylococcal nuclease domain-containing protein 1 (snd1) from Danio rerio (Zebrafish).